The chain runs to 467 residues: Glutamate--tRNA ligase (467 aa).

The 'HIGH' region signature appears at P13 to G23. The short motif at K245 to R249 is the 'KMSKS' region element. K248 is a binding site for ATP.

It belongs to the class-I aminoacyl-tRNA synthetase family. Glutamate--tRNA ligase type 1 subfamily. In terms of assembly, monomer.

The protein localises to the cytoplasm. The catalysed reaction is tRNA(Glu) + L-glutamate + ATP = L-glutamyl-tRNA(Glu) + AMP + diphosphate. Functionally, catalyzes the attachment of glutamate to tRNA(Glu) in a two-step reaction: glutamate is first activated by ATP to form Glu-AMP and then transferred to the acceptor end of tRNA(Glu). The polypeptide is Glutamate--tRNA ligase (Herminiimonas arsenicoxydans).